Consider the following 1002-residue polypeptide: Calmin (1002 aa).

Residues 1 to 288 (MAAHEWDWFQ…IMTYVAQFLE (288 aa)) form an actin-binding region. The region spanning 32 to 139 (NVQKRTFTRW…LIWNIILFFQ (108 aa)) is the Calponin-homology (CH) 1 domain. A compositionally biased stretch (low complexity) spans 149-168 (RNSPSSSLSPGSGGTDSDSS). The disordered stretch occupies residues 149 to 180 (RNSPSSSLSPGSGGTDSDSSFPPTPTAERSVA). A Calponin-homology (CH) 2 domain is found at 187–291 (RKAIKALLAW…YVAQFLERFP (105 aa)). Phosphoserine occurs at positions 301 and 402. Disordered stretches follow at residues 389–418 (QGGP…GRSN), 500–532 (NNNS…GENT), 581–716 (NKVP…SPPL), and 749–911 (DLKN…DSSI). Residues 396–409 (SDISEPSPESSILS) are compositionally biased toward low complexity. The segment covering 500–509 (NNNSQSSSCN) has biased composition (polar residues). Positions 585-606 (SPHETKPDEDAEAFENHAEKLG) are enriched in basic and acidic residues. A compositionally biased stretch (basic residues) spans 607 to 617 (KRSIKSAHKKK). Basic and acidic residues-rich tracts occupy residues 618 to 635 (DSPE…HQDS) and 650 to 659 (PVDKKPEVHE). Residue serine 619 is modified to Phosphoserine. Low complexity predominate over residues 681 to 697 (GVGEELSSSPPSSCVSL). Threonine 699 bears the Phosphothreonine mark. Serine 713 and serine 769 each carry phosphoserine. Over residues 776–794 (GSQSSSSSSVPGESLPSAS) the composition is skewed to low complexity. Residues 818–834 (PHEDHQQRETKENDPMD) show a composition bias toward basic and acidic residues. A compositionally biased stretch (polar residues) spans 835-846 (SHQSQESPNLEN). Phosphoserine occurs at positions 838 and 841. Residues 854–863 (NVTKESISSK) are compositionally biased toward basic and acidic residues. Residues 898–910 (YSIPSRTSHSDSS) are compositionally biased toward polar residues. Serine 907 is modified (phosphoserine). The chain crosses the membrane as a helical; Anchor for type IV membrane protein span at residues 977 to 997 (MMYFILFLWLLVYCLLLFPQL).

As to expression, widely expressed at intermediate level.

It localises to the membrane. The sequence is that of Calmin (CLMN) from Homo sapiens (Human).